A 275-amino-acid chain; its full sequence is NH(3)-dependent NAD(+) synthetase (275 aa).

46–53 (GISGGQDS) contributes to the ATP binding site. Residue Asp-52 coordinates Mg(2+). Deamido-NAD(+) is bound at residue Arg-140. Thr-160 lines the ATP pocket. Residue Glu-165 participates in Mg(2+) binding. Deamido-NAD(+) contacts are provided by Lys-173 and Asp-180. Positions 189 and 211 each coordinate ATP. Deamido-NAD(+) is bound at residue 260–261 (HK).

The protein belongs to the NAD synthetase family. As to quaternary structure, homodimer.

The enzyme catalyses deamido-NAD(+) + NH4(+) + ATP = AMP + diphosphate + NAD(+) + H(+). It functions in the pathway cofactor biosynthesis; NAD(+) biosynthesis; NAD(+) from deamido-NAD(+) (ammonia route): step 1/1. Its function is as follows. Catalyzes the ATP-dependent amidation of deamido-NAD to form NAD. Uses ammonia as a nitrogen source. This Shigella boydii serotype 18 (strain CDC 3083-94 / BS512) protein is NH(3)-dependent NAD(+) synthetase.